The chain runs to 301 residues: Cytosolic sulfotransferase 2 (301 aa).

53-58 (KAGTTW) is a 3'-phosphoadenylyl sulfate binding site. Residue His-115 is the Proton acceptor of the active site. Residues Arg-137, Ser-145, Tyr-201, 235 to 240 (VQFDVM), and 263 to 265 (RKG) each bind 3'-phosphoadenylyl sulfate.

This sequence belongs to the sulfotransferase 1 family. As to expression, expressed in liver.

It is found in the cytoplasm. Inhibited by Co(2+), Zn(2+), Cd(2+) and Pb(2+) ions. Inactivated by Hg(2+) and Cu(2+) ions. In terms of biological role, sulfotransferase that utilizes 3'-phospho-5'-adenylyl sulfate (PAPS) as sulfonate donor to catalyze the sulfate conjugation of a variety of xenobiotic and endogenous compounds, including 2-naphthol, hydroxychlorobiphenyls, T3 (triiodo-L-thyronine), T4 (thyroxine), estrone and DOPA. This Danio rerio (Zebrafish) protein is Cytosolic sulfotransferase 2.